The primary structure comprises 505 residues: Deoxyguanosinetriphosphate triphosphohydrolase (505 aa).

The HD domain maps to arginine 66–cysteine 273.

This sequence belongs to the dGTPase family. Type 1 subfamily. As to quaternary structure, homotetramer. It depends on Mg(2+) as a cofactor.

It carries out the reaction dGTP + H2O = 2'-deoxyguanosine + triphosphate + H(+). In terms of biological role, dGTPase preferentially hydrolyzes dGTP over the other canonical NTPs. This Escherichia coli O139:H28 (strain E24377A / ETEC) protein is Deoxyguanosinetriphosphate triphosphohydrolase.